The chain runs to 368 residues: Molybdenum import ATP-binding protein ModC (368 aa).

One can recognise an ABC transporter domain in the interval Met1–Ser231. Gly33–Thr40 lines the ATP pocket. A Mop domain is found at Lys292 to Asp363.

Belongs to the ABC transporter superfamily. Molybdate importer (TC 3.A.1.8) family. As to quaternary structure, the complex is composed of two ATP-binding proteins (ModC), two transmembrane proteins (ModB) and a solute-binding protein (ModA).

The protein resides in the cell inner membrane. It catalyses the reaction molybdate(out) + ATP + H2O = molybdate(in) + ADP + phosphate + H(+). Part of the ABC transporter complex ModABC involved in molybdenum import. Responsible for energy coupling to the transport system. The chain is Molybdenum import ATP-binding protein ModC from Vibrio vulnificus (strain YJ016).